Consider the following 114-residue polypeptide: Biofilm growth-associated repressor (114 aa).

One can recognise an HTH arsR-type domain in the interval 17–111 (DMEKRANEVA…ALYTIFCTQE (95 aa)). Residues 51-74 (VGELEQQIGIGQPTLSQQLGVLRE) constitute a DNA-binding region (H-T-H motif).

Represses an operon that probably comprises itself, PD_1892, PD_1893, PD_1894 and blh. Binds to a palindromic AT-rich sequence spanning the -10 region of the blh promoter and blocks transcription of the operon. This Xylella fastidiosa (strain Temecula1 / ATCC 700964) protein is Biofilm growth-associated repressor (bigR).